A 971-amino-acid chain; its full sequence is Unconventional myosin-XIX (971 aa).

Positions 1 to 25 (MSRPLSKNTEREPKQINGHQNNLSN) are disordered. Positions 48–755 (HLYDDLTKVN…MVELLEERRL (708 aa)) constitute a Myosin motor domain. An ATP-binding site is contributed by 145–152 (GESGAGKT). The actin-binding stretch occupies residues 611–633 (LESLMQILHSTTPHYIRCIKPNV). 2 IQ domains span residues 758 to 787 (ISSK…ATTI) and 780 to 809 (QSKA…AATV). The interval 826–971 (AAELDDSTED…FNEILLEKTV (146 aa)) is myMOMA region.

The protein belongs to the TRAFAC class myosin-kinesin ATPase superfamily. Myosin family. Myosin is a hexamer of 2 heavy chains and 4 light chains.

Its subcellular location is the mitochondrion outer membrane. It localises to the cytoplasm. It is found in the cytoskeleton. Functionally, actin-based motor molecule with ATPase activity that localizes to the mitochondrion outer membrane. Motor protein that moves towards the plus-end of actin filaments. Required for mitochondrial inheritance during mitosis. May be involved in mitochondrial transport or positioning. The protein is Unconventional myosin-XIX of Xenopus laevis (African clawed frog).